The following is a 126-amino-acid chain: Small ribosomal subunit protein uS11 (126 aa).

It belongs to the universal ribosomal protein uS11 family. As to quaternary structure, part of the 30S ribosomal subunit. Interacts with proteins S7 and S18. Binds to IF-3.

Functionally, located on the platform of the 30S subunit, it bridges several disparate RNA helices of the 16S rRNA. Forms part of the Shine-Dalgarno cleft in the 70S ribosome. In Treponema pallidum (strain Nichols), this protein is Small ribosomal subunit protein uS11.